The chain runs to 298 residues: Lipoyl synthase (298 aa).

7 residues coordinate [4Fe-4S] cluster: cysteine 43, cysteine 48, cysteine 54, cysteine 69, cysteine 73, cysteine 76, and serine 280. The region spanning 55-269 is the Radical SAM core domain; the sequence is FSSGTATFLI…AACGRGMGIP (215 aa).

This sequence belongs to the radical SAM superfamily. Lipoyl synthase family. It depends on [4Fe-4S] cluster as a cofactor.

The protein resides in the cytoplasm. The enzyme catalyses [[Fe-S] cluster scaffold protein carrying a second [4Fe-4S](2+) cluster] + N(6)-octanoyl-L-lysyl-[protein] + 2 oxidized [2Fe-2S]-[ferredoxin] + 2 S-adenosyl-L-methionine + 4 H(+) = [[Fe-S] cluster scaffold protein] + N(6)-[(R)-dihydrolipoyl]-L-lysyl-[protein] + 4 Fe(3+) + 2 hydrogen sulfide + 2 5'-deoxyadenosine + 2 L-methionine + 2 reduced [2Fe-2S]-[ferredoxin]. It participates in protein modification; protein lipoylation via endogenous pathway; protein N(6)-(lipoyl)lysine from octanoyl-[acyl-carrier-protein]: step 2/2. Functionally, catalyzes the radical-mediated insertion of two sulfur atoms into the C-6 and C-8 positions of the octanoyl moiety bound to the lipoyl domains of lipoate-dependent enzymes, thereby converting the octanoylated domains into lipoylated derivatives. The protein is Lipoyl synthase of Nitratidesulfovibrio vulgaris (strain DP4) (Desulfovibrio vulgaris).